The chain runs to 235 residues: Glycerol-3-phosphate acyltransferase (235 aa).

Helical transmembrane passes span 4–24 (LLAILTVSYIIGSIPTSIMAG), 56–76 (TVTLIDIVKGVVAAVSVVAFF), 94–114 (LLAGMSAVIGHVFTVFAGFKG), 126–146 (IGIAPVSMLMVIGIFLLTVWF), 152–172 (VASIFAAVAFPLIIAIRKYVF), and 194–214 (SLDYHLIIFGLLVAFAILFTH).

The protein belongs to the PlsY family. Probably interacts with PlsX.

It localises to the cell inner membrane. The enzyme catalyses an acyl phosphate + sn-glycerol 3-phosphate = a 1-acyl-sn-glycero-3-phosphate + phosphate. The protein operates within lipid metabolism; phospholipid metabolism. Its function is as follows. Catalyzes the transfer of an acyl group from acyl-phosphate (acyl-PO(4)) to glycerol-3-phosphate (G3P) to form lysophosphatidic acid (LPA). This enzyme utilizes acyl-phosphate as fatty acyl donor, but not acyl-CoA or acyl-ACP. The chain is Glycerol-3-phosphate acyltransferase from Chlorobium phaeovibrioides (strain DSM 265 / 1930) (Prosthecochloris vibrioformis (strain DSM 265)).